We begin with the raw amino-acid sequence, 786 residues long: Probable aminopeptidase 1 (786 aa).

Substrate contacts are provided by residues Glu103 and 235–239 (GAMEN). Residue His270 participates in Zn(2+) binding. The active-site Proton acceptor is Glu271. Residues His274 and Glu293 each coordinate Zn(2+).

The protein belongs to the peptidase M1 family. Requires Zn(2+) as cofactor.

It localises to the cytoplasm. This Sulfurisphaera tokodaii (strain DSM 16993 / JCM 10545 / NBRC 100140 / 7) (Sulfolobus tokodaii) protein is Probable aminopeptidase 1 (ape1).